Consider the following 188-residue polypeptide: dCTP deaminase (188 aa).

DCTP contacts are provided by residues 111–116, 135–137, Q156, Y170, and Q180; these read KSTYAR and TLE. The active-site Proton donor/acceptor is E137.

It belongs to the dCTP deaminase family. Homotrimer.

It catalyses the reaction dCTP + H2O + H(+) = dUTP + NH4(+). Its pathway is pyrimidine metabolism; dUMP biosynthesis; dUMP from dCTP (dUTP route): step 1/2. Catalyzes the deamination of dCTP to dUTP. In Thiobacillus denitrificans (strain ATCC 25259 / T1), this protein is dCTP deaminase.